Here is a 738-residue protein sequence, read N- to C-terminus: Pentatricopeptide repeat-containing protein At5g65570 (738 aa).

PPR repeat units lie at residues 98 to 128 (AEIS…MSER), 129 to 163 (HIVT…NVLP), 164 to 198 (DEYT…GLEV), 200 to 230 (NVFV…VEEK), 231 to 265 (DVVL…KVQP), 266 to 300 (NEYT…GFES), 301 to 331 (ALAS…IEYP), 332 to 366 (NQVS…SIKP), 367 to 401 (NSFT…GFDR), 402 to 432 (DKYA…LSEV), 433 to 467 (DVIS…GLQP), 468 to 502 (NDVT…KIML), and 503 to 537 (TNDH…DLVL). The interval 537 to 612 (LWRTLLSACK…NPAMSWVEIN (76 aa)) is type E motif. The type E(+) motif stretch occupies residues 613–644 (KETHTFMAGDLFSHPNSEQILENLEELIKKSK). Residues 645–738 (DLGYVEDKSC…DGSCSCGDYW (94 aa)) are type DYW motif.

It belongs to the PPR family. PCMP-H subfamily.

The chain is Pentatricopeptide repeat-containing protein At5g65570 (PCMP-H47) from Arabidopsis thaliana (Mouse-ear cress).